A 273-amino-acid chain; its full sequence is Dermonecrotic toxin LspaSicTox-alphaIA2iii (273 aa).

H5 is an active-site residue. Residues E25 and D27 each coordinate Mg(2+). H41 (nucleophile) is an active-site residue. 2 disulfide bridges follow: C45–C51 and C47–C190. Mg(2+) is bound at residue D85.

It belongs to the arthropod phospholipase D family. Class II subfamily. Requires Mg(2+) as cofactor. Expressed by the venom gland.

The protein resides in the secreted. The enzyme catalyses an N-(acyl)-sphingosylphosphocholine = an N-(acyl)-sphingosyl-1,3-cyclic phosphate + choline. It catalyses the reaction an N-(acyl)-sphingosylphosphoethanolamine = an N-(acyl)-sphingosyl-1,3-cyclic phosphate + ethanolamine. The catalysed reaction is a 1-acyl-sn-glycero-3-phosphocholine = a 1-acyl-sn-glycero-2,3-cyclic phosphate + choline. It carries out the reaction a 1-acyl-sn-glycero-3-phosphoethanolamine = a 1-acyl-sn-glycero-2,3-cyclic phosphate + ethanolamine. In terms of biological role, dermonecrotic toxins cleave the phosphodiester linkage between the phosphate and headgroup of certain phospholipids (sphingolipid and lysolipid substrates), forming an alcohol (often choline) and a cyclic phosphate. This toxin acts on sphingomyelin (SM). It may also act on ceramide phosphoethanolamine (CPE), lysophosphatidylcholine (LPC) and lysophosphatidylethanolamine (LPE), but not on lysophosphatidylserine (LPS), and lysophosphatidylglycerol (LPG). It acts by transphosphatidylation, releasing exclusively cyclic phosphate products as second products. Induces dermonecrosis, hemolysis, increased vascular permeability, edema, inflammatory response, and platelet aggregation. In Loxosceles spadicea (Recluse spider), this protein is Dermonecrotic toxin LspaSicTox-alphaIA2iii.